The sequence spans 253 residues: Sugar fermentation stimulation protein homolog (253 aa).

Belongs to the SfsA family.

In Prochlorococcus marinus (strain NATL1A), this protein is Sugar fermentation stimulation protein homolog.